Reading from the N-terminus, the 254-residue chain is uncharacterized protein (254 aa).

This is an uncharacterized protein from Acheta domesticus (House cricket).